Consider the following 456-residue polypeptide: Exodeoxyribonuclease 7 large subunit (456 aa).

The protein belongs to the XseA family. Heterooligomer composed of large and small subunits.

It localises to the cytoplasm. It carries out the reaction Exonucleolytic cleavage in either 5'- to 3'- or 3'- to 5'-direction to yield nucleoside 5'-phosphates.. Bidirectionally degrades single-stranded DNA into large acid-insoluble oligonucleotides, which are then degraded further into small acid-soluble oligonucleotides. This Lactobacillus johnsonii (strain CNCM I-12250 / La1 / NCC 533) protein is Exodeoxyribonuclease 7 large subunit.